The primary structure comprises 85 residues: Small ribosomal subunit protein bS20 (85 aa).

The protein belongs to the bacterial ribosomal protein bS20 family.

Its function is as follows. Binds directly to 16S ribosomal RNA. The protein is Small ribosomal subunit protein bS20 of Ruminiclostridium cellulolyticum (strain ATCC 35319 / DSM 5812 / JCM 6584 / H10) (Clostridium cellulolyticum).